The sequence spans 362 residues: Phosphoserine aminotransferase (362 aa).

Position 41 (arginine 41) interacts with L-glutamate. Pyridoxal 5'-phosphate contacts are provided by residues 75-76, phenylalanine 101, threonine 152, aspartate 173, and glutamine 196; that span reads GS. N6-(pyridoxal phosphate)lysine is present on lysine 197. Pyridoxal 5'-phosphate is bound at residue 239–240; it reads NT.

The protein belongs to the class-V pyridoxal-phosphate-dependent aminotransferase family. SerC subfamily. In terms of assembly, homodimer. It depends on pyridoxal 5'-phosphate as a cofactor.

The protein resides in the cytoplasm. It carries out the reaction O-phospho-L-serine + 2-oxoglutarate = 3-phosphooxypyruvate + L-glutamate. The catalysed reaction is 4-(phosphooxy)-L-threonine + 2-oxoglutarate = (R)-3-hydroxy-2-oxo-4-phosphooxybutanoate + L-glutamate. The protein operates within amino-acid biosynthesis; L-serine biosynthesis; L-serine from 3-phospho-D-glycerate: step 2/3. Functionally, catalyzes the reversible conversion of 3-phosphohydroxypyruvate to phosphoserine and of 3-hydroxy-2-oxo-4-phosphonooxybutanoate to phosphohydroxythreonine. The chain is Phosphoserine aminotransferase from Leuconostoc mesenteroides subsp. mesenteroides (strain ATCC 8293 / DSM 20343 / BCRC 11652 / CCM 1803 / JCM 6124 / NCDO 523 / NBRC 100496 / NCIMB 8023 / NCTC 12954 / NRRL B-1118 / 37Y).